Reading from the N-terminus, the 212-residue chain is ATP-dependent dethiobiotin synthetase BioD (212 aa).

13–18 (GIGKTV) is an ATP binding site. Position 17 (Thr17) interacts with Mg(2+). Lys33 is an active-site residue. Ser37 contacts substrate. Mg(2+) is bound at residue Glu100. Residues 100–103 (EGAG) and 184–186 (PRL) contribute to the ATP site.

The protein belongs to the dethiobiotin synthetase family. Homodimer. Mg(2+) serves as cofactor.

It is found in the cytoplasm. It catalyses the reaction (7R,8S)-7,8-diammoniononanoate + CO2 + ATP = (4R,5S)-dethiobiotin + ADP + phosphate + 3 H(+). The protein operates within cofactor biosynthesis; biotin biosynthesis; biotin from 7,8-diaminononanoate: step 1/2. In terms of biological role, catalyzes a mechanistically unusual reaction, the ATP-dependent insertion of CO2 between the N7 and N8 nitrogen atoms of 7,8-diaminopelargonic acid (DAPA, also called 7,8-diammoniononanoate) to form a ureido ring. This chain is ATP-dependent dethiobiotin synthetase BioD, found in Agrobacterium fabrum (strain C58 / ATCC 33970) (Agrobacterium tumefaciens (strain C58)).